Consider the following 316-residue polypeptide: Ribosomal RNA small subunit methyltransferase H (316 aa).

S-adenosyl-L-methionine contacts are provided by residues S35–H37, D55, F84, D105, and Q112.

It belongs to the methyltransferase superfamily. RsmH family.

It is found in the cytoplasm. The catalysed reaction is cytidine(1402) in 16S rRNA + S-adenosyl-L-methionine = N(4)-methylcytidine(1402) in 16S rRNA + S-adenosyl-L-homocysteine + H(+). Its function is as follows. Specifically methylates the N4 position of cytidine in position 1402 (C1402) of 16S rRNA. The sequence is that of Ribosomal RNA small subunit methyltransferase H from Streptococcus pyogenes serotype M4 (strain MGAS10750).